Reading from the N-terminus, the 207-residue chain is MAAAWPSGPSAPEAVTARLVGVLWFVSVTTGPWGAVATSAGGEESLKCEDLKVGQYICKDPKINDATQEPVNCTNYTAHVSCFPAPNITCKDSSGNETHFTGNEVGFFKPISCRNVNGYSYKVAVALSLFLGWLGADRFYLGYPALGLLKFCTVGFCGIGSLIDFILISMQIVGPSDGSSYIIDYYGTRLTRLSITNETFRKTQLYP.

The first 37 residues, 1-37 (MAAAWPSGPSAPEAVTARLVGVLWFVSVTTGPWGAVA), serve as a signal peptide directing secretion. The Extracellular segment spans residues 40–128 (AGGEESLKCE…YSYKVAVALS (89 aa)). 4 N-linked (GlcNAc...) asparagine glycosylation sites follow: asparagine 72, asparagine 75, asparagine 87, and asparagine 96. One can recognise a TM2 domain in the interval 118–166 (GYSYKVAVALSLFLGWLGADRFYLGYPALGLLKFCTVGFCGIGSLIDFI). The helical transmembrane segment at 129–149 (LFLGWLGADRFYLGYPALGLL) threads the bilayer. Topologically, residues 150-153 (KFCT) are cytoplasmic. The chain crosses the membrane as a helical span at residues 154–174 (VGFCGIGSLIDFILISMQIVG). Over 175–207 (PSDGSSYIIDYYGTRLTRLSITNETFRKTQLYP) the chain is Extracellular. Asparagine 197 carries an N-linked (GlcNAc...) asparagine glycan.

This sequence belongs to the TM2 family. Interacts with APP beta-APP42 (amyloid-beta protein 42). N-glycosylated. In terms of tissue distribution, widely expressed.

The protein localises to the membrane. May participate in amyloid-beta-induced apoptosis via its interaction with beta-APP42. This Homo sapiens (Human) protein is TM2 domain-containing protein 1 (TM2D1).